Here is a 153-residue protein sequence, read N- to C-terminus: ATP synthase subunit b' (153 aa).

A helical transmembrane segment spans residues Thr-20–Phe-40.

Belongs to the ATPase B chain family. F-type ATPases have 2 components, F(1) - the catalytic core - and F(0) - the membrane proton channel. F(1) has five subunits: alpha(3), beta(3), gamma(1), delta(1), epsilon(1). F(0) has four main subunits: a(1), b(1), b'(1) and c(10-14). The alpha and beta chains form an alternating ring which encloses part of the gamma chain. F(1) is attached to F(0) by a central stalk formed by the gamma and epsilon chains, while a peripheral stalk is formed by the delta, b and b' chains.

The protein localises to the cellular thylakoid membrane. Functionally, f(1)F(0) ATP synthase produces ATP from ADP in the presence of a proton or sodium gradient. F-type ATPases consist of two structural domains, F(1) containing the extramembraneous catalytic core and F(0) containing the membrane proton channel, linked together by a central stalk and a peripheral stalk. During catalysis, ATP synthesis in the catalytic domain of F(1) is coupled via a rotary mechanism of the central stalk subunits to proton translocation. Component of the F(0) channel, it forms part of the peripheral stalk, linking F(1) to F(0). The b'-subunit is a diverged and duplicated form of b found in plants and photosynthetic bacteria. The protein is ATP synthase subunit b' of Prochlorococcus marinus (strain NATL2A).